Here is a 518-residue protein sequence, read N- to C-terminus: GMP synthase [glutamine-hydrolyzing] (518 aa).

The Glutamine amidotransferase type-1 domain occupies 8-201 (TVLIIDFGSQ…VHKISGLKGN (194 aa)). Cys85 functions as the Nucleophile in the catalytic mechanism. Catalysis depends on residues His175 and Glu177. In terms of domain architecture, GMPS ATP-PPase spans 202–393 (WSMASYRDQA…LGLPEQFLGR (192 aa)). Position 229 to 235 (229 to 235 (SGGVDSS)) interacts with ATP.

Homodimer.

It carries out the reaction XMP + L-glutamine + ATP + H2O = GMP + L-glutamate + AMP + diphosphate + 2 H(+). It participates in purine metabolism; GMP biosynthesis; GMP from XMP (L-Gln route): step 1/1. Its function is as follows. Catalyzes the synthesis of GMP from XMP. The chain is GMP synthase [glutamine-hydrolyzing] from Bartonella quintana (strain Toulouse) (Rochalimaea quintana).